An 882-amino-acid chain; its full sequence is Protein O-mannosyl-transferase TMTC1 (882 aa).

Topologically, residues 1–20 (MVVTTSARGGGGDRTPSRRR) are cytoplasmic. Positions 1-20 (MVVTTSARGGGGDRTPSRRR) are disordered. Residues 21 to 41 (GCGLAPAGAAALLAGASCLCY) form a helical membrane-spanning segment. Topologically, residues 42 to 110 (GRSLQGEFVH…KLNIFLTGMN (69 aa)) are extracellular. Asn-86 carries N-linked (GlcNAc...) asparagine glycosylation. A helical transmembrane segment spans residues 111–131 (PFYFHAVNIILHCLVTLVLMY). Over 132–137 (TCDKTV) the chain is Cytoplasmic. A helical membrane pass occupies residues 138-157 (FKNRGLAFVTALLFAVHPIH). Residues 158–160 (TEA) are Extracellular-facing. The chain crosses the membrane as a helical span at residues 161–181 (VAGIVGRADVLACLLFLLAFL). Residues 182–197 (SYNRSLDQGCVGGSFP) lie on the Cytoplasmic side of the membrane. Residues 198–218 (STVSPFFLLLSLFLGTCAMLV) traverse the membrane as a helical segment. At 219-221 (KET) the chain is on the extracellular side. A helical membrane pass occupies residues 222–238 (GITVFGVCLVYDLFSLS). Topologically, residues 239-313 (NKQDKSSNGA…SPRAVWSMMR (75 aa)) are cytoplasmic. The disordered stretch occupies residues 246 to 277 (NGALCPRSPQQPGSPQPSSLPGHPHRENGKQQ). Residues 251 to 267 (PRSPQQPGSPQPSSLPG) are compositionally biased toward low complexity. A helical transmembrane segment spans residues 314-334 (FLTYSYLLAFNVWLLLAPVTL). Topologically, residues 335–354 (CYDWQVGSIPLVETIWDMRN) are extracellular. A helical transmembrane segment spans residues 355-375 (LATIFLAVVMALLSLHCLAAF). Residues 376–381 (KRLEHK) lie on the Cytoplasmic side of the membrane. Residues 382 to 402 (EVLVGLLFLVFPFIPASNLFF) form a helical membrane-spanning segment. A topological domain (extracellular) is located at residue Arg-403. A helical membrane pass occupies residues 404–424 (VGFVVAERVLYMPSMGYCILF). Residues 425–438 (VHGLSKLCTWLNRC) lie on the Cytoplasmic side of the membrane. The helical transmembrane segment at 439–459 (GATTLIVSTVLLLLLFSWKTV) threads the bilayer. The Extracellular segment spans residues 460–882 (KQNEIWLSRE…LQEVREKDQT (423 aa)). 10 TPR repeats span residues 483 to 516 (AKVH…YPRH), 517 to 547 (ASAL…HPQH), 548 to 581 (NRAL…GPEF), 582 to 615 (ADAY…CPDS), 616 to 649 (SDLH…SPSH), 650 to 682 (HVAM…VAHK), 683 to 716 (AEIL…QPSQ), 751 to 784 (LECY…KPKD), 789 to 822 (SELF…NPDQ), and 823 to 856 (AQAW…VPDS).

This sequence belongs to the TMTC family. In terms of assembly, may interact with FAM168B.

The protein localises to the membrane. It is found in the endoplasmic reticulum. It catalyses the reaction a di-trans,poly-cis-dolichyl beta-D-mannosyl phosphate + L-seryl-[protein] = 3-O-(alpha-D-mannosyl)-L-seryl-[protein] + a di-trans,poly-cis-dolichyl phosphate + H(+). The catalysed reaction is a di-trans,poly-cis-dolichyl beta-D-mannosyl phosphate + L-threonyl-[protein] = 3-O-(alpha-D-mannosyl)-L-threonyl-[protein] + a di-trans,poly-cis-dolichyl phosphate + H(+). It functions in the pathway protein modification; protein glycosylation. Transfers mannosyl residues to the hydroxyl group of serine or threonine residues. The 4 members of the TMTC family are O-mannosyl-transferases dedicated primarily to the cadherin superfamily, each member seems to have a distinct role in decorating the cadherin domains with O-linked mannose glycans at specific regions. Also acts as O-mannosyl-transferase on other proteins such as PDIA3. The chain is Protein O-mannosyl-transferase TMTC1 from Homo sapiens (Human).